The primary structure comprises 795 residues: Endoplasmin (795 aa).

Residues 1-21 form the signal peptide; sequence MKSAWALALACTLLLAASVTA. Positions 41 to 43 match the SRT pseudosubstrate motif motif; the sequence is SRT. N-linked (GlcNAc...) asparagine glycans are attached at residues Asn61 and Asn106. The ATP site is built by Asn106, Asp148, Asn161, and Phe198. N-linked (GlcNAc...) asparagine glycosylation occurs at Asn216. A compositionally biased stretch (acidic residues) spans 289-316; the sequence is EEPVEEEEAKEEKEETDDNEAAVEEEEE. The segment at 289–322 is disordered; that stretch reads EEPVEEEEAKEEKEETDDNEAAVEEEEEEKKPKT. N-linked (GlcNAc...) asparagine glycans are attached at residues Asn444, Asn480, and Asn501. The segment at 751-795 is disordered; it reads DAKVEEEPEEPEDAAEEAEQDEEEVDADAEDSETQKESTDVKDEL. The segment covering 756–782 has biased composition (acidic residues); the sequence is EEPEEPEDAAEEAEQDEEEVDADAEDS. The segment covering 783 to 795 has biased composition (basic and acidic residues); sequence ETQKESTDVKDEL. The Prevents secretion from ER signature appears at 792–795; sequence KDEL.

It belongs to the heat shock protein 90 family. In terms of assembly, homodimer; disulfide-linked.

Its subcellular location is the endoplasmic reticulum lumen. The protein localises to the sarcoplasmic reticulum lumen. The enzyme catalyses ATP + H2O = ADP + phosphate + H(+). Its function is as follows. ATP-dependent chaperone involved in the processing of proteins in the endoplasmic reticulum, regulating their transport. The chain is Endoplasmin (HSP90B1) from Gallus gallus (Chicken).